The chain runs to 117 residues: UPF0102 protein FTN_0424 (117 aa).

Belongs to the UPF0102 family.

The polypeptide is UPF0102 protein FTN_0424 (Francisella tularensis subsp. novicida (strain U112)).